The following is a 121-amino-acid chain: Large ribosomal subunit protein bL12 (121 aa).

It belongs to the bacterial ribosomal protein bL12 family. Homodimer. Part of the ribosomal stalk of the 50S ribosomal subunit. Forms a multimeric L10(L12)X complex, where L10 forms an elongated spine to which 2 to 4 L12 dimers bind in a sequential fashion. Binds GTP-bound translation factors.

Functionally, forms part of the ribosomal stalk which helps the ribosome interact with GTP-bound translation factors. Is thus essential for accurate translation. This Xanthomonas axonopodis pv. citri (strain 306) protein is Large ribosomal subunit protein bL12.